The primary structure comprises 118 residues: Small ribosomal subunit protein uS13 (118 aa).

The segment at 91–118 is disordered; sequence HRRGLPVRGQRTKTNARTRKGPRKPIKK.

It belongs to the universal ribosomal protein uS13 family. In terms of assembly, part of the 30S ribosomal subunit. Forms a loose heterodimer with protein S19. Forms two bridges to the 50S subunit in the 70S ribosome.

Functionally, located at the top of the head of the 30S subunit, it contacts several helices of the 16S rRNA. In the 70S ribosome it contacts the 23S rRNA (bridge B1a) and protein L5 of the 50S subunit (bridge B1b), connecting the 2 subunits; these bridges are implicated in subunit movement. Contacts the tRNAs in the A and P-sites. This is Small ribosomal subunit protein uS13 from Serratia proteamaculans (strain 568).